The following is a 411-amino-acid chain: Dihydrolipoyllysine-residue succinyltransferase component of 2-oxoglutarate dehydrogenase complex (411 aa).

The Lipoyl-binding domain maps to 2 to 77; that stretch reads TTEIRVPTLG…EVNALLGAVE (76 aa). Position 43 is an N6-lipoyllysine (Lys-43). A compositionally biased stretch (low complexity) spans 82–100; that stretch reads SVAKSPSSSETSVSAAPSE. Residues 82–115 form a disordered region; the sequence is SVAKSPSSSETSVSAAPSELEQSSSSNTMPPAPS. Positions 101–110 are enriched in polar residues; the sequence is LEQSSSSNTM. A Peripheral subunit-binding (PSBD) domain is found at 111 to 148; sequence PPAPSAAKLMAENNIAKSDILGSGKRGQILKEDVLNVL. Active-site residues include His-382 and Asp-386.

Belongs to the 2-oxoacid dehydrogenase family. In terms of assembly, forms a 24-polypeptide structural core with octahedral symmetry. Part of the 2-oxoglutarate dehydrogenase (OGDH) complex composed of E1 (2-oxoglutarate dehydrogenase), E2 (dihydrolipoamide succinyltransferase) and E3 (dihydrolipoamide dehydrogenase); the complex contains multiple copies of the three enzymatic components (E1, E2 and E3). Requires (R)-lipoate as cofactor.

The enzyme catalyses N(6)-[(R)-dihydrolipoyl]-L-lysyl-[protein] + succinyl-CoA = N(6)-[(R)-S(8)-succinyldihydrolipoyl]-L-lysyl-[protein] + CoA. Its pathway is amino-acid degradation; L-lysine degradation via saccharopine pathway; glutaryl-CoA from L-lysine: step 6/6. Functionally, E2 component of the 2-oxoglutarate dehydrogenase (OGDH) complex which catalyzes the second step in the conversion of 2-oxoglutarate to succinyl-CoA and CO(2). The polypeptide is Dihydrolipoyllysine-residue succinyltransferase component of 2-oxoglutarate dehydrogenase complex (sucB) (Bartonella vinsonii subsp. berkhoffii).